The primary structure comprises 946 residues: C-1-tetrahydrofolate synthase, cytoplasmic (946 aa).

The interval 2–319 (AGQVLDGKAC…PPLPLKLLTP (318 aa)) is methylenetetrahydrofolate dehydrogenase and cyclohydrolase. Residues 51-55 (YVRMK) and 98-100 (VQL) each bind substrate. Position 169-171 (169-171 (GRS)) interacts with NADP(+). Phosphoserine is present on Ser176. Ser194 serves as a coordination point for NADP(+). 277–281 (PGGVG) serves as a coordination point for substrate. Thr318 carries the post-translational modification Phosphothreonine. The tract at residues 320 to 946 (VPSDIDISRA…DDDGEIDGLF (627 aa)) is formyltetrahydrofolate synthetase. At Ser322 the chain carries Phosphoserine. 384 to 391 (TPLGEGKS) is a binding site for ATP.

The protein in the N-terminal section; belongs to the tetrahydrofolate dehydrogenase/cyclohydrolase family. It in the C-terminal section; belongs to the formate--tetrahydrofolate ligase family. In terms of assembly, homodimer.

The protein resides in the cytoplasm. Its subcellular location is the nucleus. The catalysed reaction is (6R)-5,10-methylene-5,6,7,8-tetrahydrofolate + NADP(+) = (6R)-5,10-methenyltetrahydrofolate + NADPH. It carries out the reaction (6R)-5,10-methenyltetrahydrofolate + H2O = (6R)-10-formyltetrahydrofolate + H(+). The enzyme catalyses (6S)-5,6,7,8-tetrahydrofolate + formate + ATP = (6R)-10-formyltetrahydrofolate + ADP + phosphate. Its pathway is one-carbon metabolism; tetrahydrofolate interconversion. Cytoplasmic isozyme of C-1-tetrahydrofolate synthase. The trifunctional enzyme catalyzes the interconversion of the one-carbon derivatives of tetrahydrofolate (THF) between different oxidation states by the enzymatic activities 10-formyltetrahydrofolate synthetase, 5,lO-methenyltetrahydrofolate cyclohydrolase, and 5,lO-methylenetetrahydrofolate dehydrogenase. Involved in the generation of one-carbon intermediates in the biosynthesis of the purine bases. This Saccharomyces cerevisiae (strain ATCC 204508 / S288c) (Baker's yeast) protein is C-1-tetrahydrofolate synthase, cytoplasmic (ADE3).